Consider the following 401-residue polypeptide: Large ribosomal subunit protein uL4 (401 aa).

The protein belongs to the universal ribosomal protein uL4 family.

This Drosophila melanogaster (Fruit fly) protein is Large ribosomal subunit protein uL4 (RpL4).